The chain runs to 163 residues: Nucleotide-binding protein NFA_51200 (163 aa).

This sequence belongs to the YajQ family.

Its function is as follows. Nucleotide-binding protein. This Nocardia farcinica (strain IFM 10152) protein is Nucleotide-binding protein NFA_51200.